The chain runs to 444 residues: Methylenetetrahydrofolate--tRNA-(uracil-5-)-methyltransferase TrmFO (444 aa).

11-16 (GGGLAG) contributes to the FAD binding site.

Belongs to the MnmG family. TrmFO subfamily. FAD is required as a cofactor.

It localises to the cytoplasm. It catalyses the reaction uridine(54) in tRNA + (6R)-5,10-methylene-5,6,7,8-tetrahydrofolate + NADH + H(+) = 5-methyluridine(54) in tRNA + (6S)-5,6,7,8-tetrahydrofolate + NAD(+). The enzyme catalyses uridine(54) in tRNA + (6R)-5,10-methylene-5,6,7,8-tetrahydrofolate + NADPH + H(+) = 5-methyluridine(54) in tRNA + (6S)-5,6,7,8-tetrahydrofolate + NADP(+). Catalyzes the folate-dependent formation of 5-methyl-uridine at position 54 (M-5-U54) in all tRNAs. In Desulfotalea psychrophila (strain LSv54 / DSM 12343), this protein is Methylenetetrahydrofolate--tRNA-(uracil-5-)-methyltransferase TrmFO.